We begin with the raw amino-acid sequence, 221 residues long: Interleukin-12 subunit alpha (221 aa).

Residues 1–25 (MCPLRSLLLISTLVLLHHLPHLSLG) form the signal peptide. 3 disulfides stabilise this stretch: Cys-39/Cys-112, Cys-66/Cys-198, and Cys-87/Cys-125. N-linked (GlcNAc...) asparagine glycosylation occurs at Asn-95.

Belongs to the IL-6 superfamily. In terms of assembly, heterodimer with IL12B; disulfide-linked. This heterodimer is known as interleukin IL-12. Heterodimer with EBI3/IL27B; not disulfide-linked. This heterodimer is known as interleukin IL-35. Interacts with NBR1; this interaction promotes IL-12 secretion.

The protein resides in the secreted. Functionally, heterodimerizes with IL12B to form the IL-12 cytokine or with EBI3/IL27B to form the IL-35 cytokine. IL-12 is primarily produced by professional antigen-presenting cells (APCs) such as B-cells and dendritic cells (DCs) as well as macrophages and granulocytes and regulates T-cell and natural killer-cell responses, induces the production of interferon-gamma (IFN-gamma), favors the differentiation of T-helper 1 (Th1) cells and is an important link between innate resistance and adaptive immunity. Mechanistically, exerts its biological effects through a receptor composed of IL12R1 and IL12R2 subunits. Binding to the receptor results in the rapid tyrosine phosphorylation of a number of cellular substrates including the JAK family kinases TYK2 and JAK2. In turn, recruited STAT4 gets phosphorylated and translocates to the nucleus where it regulates cytokine/growth factor responsive genes. As part of IL-35, plays essential roles in maintaining the immune homeostasis of the liver microenvironment and also functions as an immune-suppressive cytokine. Mediates biological events through unconventional receptors composed of IL12RB2 and gp130/IL6ST heterodimers or homodimers. Signaling requires the transcription factors STAT1 and STAT4, which form a unique heterodimer that binds to distinct DNA sites. This chain is Interleukin-12 subunit alpha (IL12A), found in Ovis aries (Sheep).